Here is a 430-residue protein sequence, read N- to C-terminus: Threonine synthase (430 aa).

K108 is modified (N6-(pyridoxal phosphate)lysine).

This sequence belongs to the threonine synthase family. Pyridoxal 5'-phosphate serves as cofactor.

The enzyme catalyses O-phospho-L-homoserine + H2O = L-threonine + phosphate. The protein operates within amino-acid biosynthesis; L-threonine biosynthesis; L-threonine from L-aspartate: step 5/5. Catalyzes the gamma-elimination of phosphate from L-phosphohomoserine and the beta-addition of water to produce L-threonine. The polypeptide is Threonine synthase (thrC) (Buchnera aphidicola subsp. Baizongia pistaciae (strain Bp)).